Consider the following 1148-residue polypeptide: Replication factor C subunit 1 (1148 aa).

The span at N46–Q56 shows a compositional bias: basic and acidic residues. Disordered regions lie at residues N46 to E201 and T228 to Q380. K50 participates in a covalent cross-link: Glycyl lysine isopeptide (Lys-Gly) (interchain with G-Cter in SUMO2). Y67 carries the phosphotyrosine modification. Residues S69, S71, S73, and S108 each carry the phosphoserine modification. Residue T110 is modified to Phosphothreonine. Residues R130 to M141 show a composition bias toward polar residues. Position 156 is a phosphoserine (S156). Phosphothreonine occurs at positions 161 and 163. A phosphoserine mark is found at S164, S173, and S190. Residues E234–E246 show a composition bias toward basic and acidic residues. At S253 the chain carries Phosphoserine. Residues E262–K271 show a composition bias toward basic residues. Residues S281 and S283 each carry the phosphoserine modification. Positions S288 to G308 are enriched in basic and acidic residues. Position 312 is a phosphoserine (S312). Composition is skewed to basic and acidic residues over residues K323–T353 and A362–R376. Position 368 is a phosphoserine (S368). The BRCT domain maps to G402–A492. Composition is skewed to basic and acidic residues over residues E496–P507 and S520–L538. The segment at E496 to L538 is disordered. Position 537 is a phosphoserine (S537). S650 to K657 contacts ATP. Positions K1081–K1148 are disordered. Positions E1094–Q1105 are enriched in acidic residues. Phosphoserine occurs at positions 1104 and 1106. A Nuclear localization signal motif is present at residues I1120–T1124. Over residues S1130–K1140 the composition is skewed to basic and acidic residues.

This sequence belongs to the activator 1 large subunit family. In terms of assembly, large subunit of the RFC complex, an heteropentameric complex consisting of RFC1 and four small subunits RFC2, RFC3, RFC4 and RFC5; the RFC complex interacts with PCNA and the interaction involves RFC1. In terms of tissue distribution, wide tissue distribution. Undetectable in placental tissue.

The protein localises to the nucleus. Its function is as follows. Subunit of the replication factor C (RFC) complex which acts during elongation of primed DNA templates by DNA polymerases delta and epsilon, and is necessary for ATP-dependent loading of proliferating cell nuclear antigen (PCNA) onto primed DNA. This subunit binds to the primer-template junction. Binds the PO-B transcription element as well as other GA rich DNA sequences. Can bind single- or double-stranded DNA. This is Replication factor C subunit 1 (RFC1) from Homo sapiens (Human).